The sequence spans 322 residues: AA9 family lytic polysaccharide monooxygenase A (322 aa).

An N-terminal signal peptide occupies residues 1–15; the sequence is MKVLSLLAAASAASA. Residues histidine 16 and histidine 96 each contribute to the Cu(2+) site. Intrachain disulfides connect cysteine 54-cysteine 182 and cysteine 152-cysteine 237. 2 residues coordinate O2: histidine 168 and glutamine 177. O-linked (Man...) threonine glycans are attached at residues threonine 228 and threonine 236. Residues 286-322 form the CBM1 domain; it reads CTAAQWAQCGGMGFSGCTTCASPYTCKKMNDYYSQCS.

Belongs to the polysaccharide monooxygenase AA9 family. Requires Cu(2+) as cofactor.

The protein resides in the secreted. The enzyme catalyses [(1-&gt;4)-beta-D-glucosyl]n+m + reduced acceptor + O2 = 4-dehydro-beta-D-glucosyl-[(1-&gt;4)-beta-D-glucosyl]n-1 + [(1-&gt;4)-beta-D-glucosyl]m + acceptor + H2O.. In terms of biological role, lytic polysaccharide monooxygenase (LPMO) that depolymerizes crystalline and amorphous polysaccharides via the oxidation of scissile alpha- or beta-(1-4)-glycosidic bonds, yielding C4 oxidation products. Catalysis by LPMOs requires the reduction of the active-site copper from Cu(II) to Cu(I) by a reducing agent and H(2)O(2) or O(2) as a cosubstrate. Active on tamarind xyloglucan and konjac glucomannan. The protein is AA9 family lytic polysaccharide monooxygenase A (gh61-1) of Neurospora crassa (strain ATCC 24698 / 74-OR23-1A / CBS 708.71 / DSM 1257 / FGSC 987).